A 642-amino-acid polypeptide reads, in one-letter code: Threonine--tRNA ligase (642 aa).

The 61-residue stretch at 1–61 (MPVITLPDGS…ETDAELSIIT (61 aa)) folds into the TGS domain. The tract at residues 243-534 (DHRKIGKQLD…LIEEYAGRFP (292 aa)) is catalytic. Residues cysteine 334, histidine 385, and histidine 511 each contribute to the Zn(2+) site.

The protein belongs to the class-II aminoacyl-tRNA synthetase family. In terms of assembly, homodimer. It depends on Zn(2+) as a cofactor.

It localises to the cytoplasm. The enzyme catalyses tRNA(Thr) + L-threonine + ATP = L-threonyl-tRNA(Thr) + AMP + diphosphate + H(+). Catalyzes the attachment of threonine to tRNA(Thr) in a two-step reaction: L-threonine is first activated by ATP to form Thr-AMP and then transferred to the acceptor end of tRNA(Thr). Also edits incorrectly charged L-seryl-tRNA(Thr). This chain is Threonine--tRNA ligase, found in Shewanella sp. (strain W3-18-1).